Consider the following 2499-residue polypeptide: Probable polyketide synthase 23 (2499 aa).

The Ketosynthase family 3 (KS3) domain maps to 11–430 (DNQVAIVGLG…GSNACVLLSE (420 aa)). Residues Cys177, His316, and His354 each act as for beta-ketoacyl synthase activity in the active site. An acyl/malonyl transferases region spans residues 623-656 (GITPSIIVGHSLGEVASAFCSGMIDLETACFVIY). Catalysis depends on Ser633, which acts as the For acyl/malonyl transferase activity. The interval 924–1044 (INQLGNKNEL…SRILMKSLDV (121 aa)) is N-terminal hotdog fold. Residues 924-1209 (INQLGNKNEL…IASTLSTNID (286 aa)) form the PKS/mFAS DH domain. Catalysis depends on His956, which acts as the Proton acceptor; for dehydratase activity. The tract at residues 1059-1209 (NWSTLKREQL…IASTLSTNID (151 aa)) is C-terminal hotdog fold. Asp1121 (proton donor; for dehydratase activity) is an active-site residue. Positions 2414–2491 (EKEFSIRQDI…QIINIVTTKV (78 aa)) constitute a Carrier domain. O-(pantetheine 4'-phosphoryl)serine is present on Ser2451.

The cofactor is pantetheine 4'-phosphate.

In terms of biological role, probable polyketide synthase. In Dictyostelium discoideum (Social amoeba), this protein is Probable polyketide synthase 23 (pks23).